The primary structure comprises 165 residues: RNA pyrophosphohydrolase (165 aa).

Positions 13 to 154 (PYRQGVGIML…KRPVYEQVVA (142 aa)) constitute a Nudix hydrolase domain. The Nudix box motif lies at 46 to 67 (GGIDAGEDPETAAWREMEEEIG).

It belongs to the Nudix hydrolase family. RppH subfamily. A divalent metal cation is required as a cofactor.

Accelerates the degradation of transcripts by removing pyrophosphate from the 5'-end of triphosphorylated RNA, leading to a more labile monophosphorylated state that can stimulate subsequent ribonuclease cleavage. In Rhodospirillum rubrum (strain ATCC 11170 / ATH 1.1.1 / DSM 467 / LMG 4362 / NCIMB 8255 / S1), this protein is RNA pyrophosphohydrolase.